Consider the following 521-residue polypeptide: Cytochrome P450 1A1 (521 aa).

Phe229 is a substrate binding site. Cys463 contributes to the heme binding site.

This sequence belongs to the cytochrome P450 family. Requires heme as cofactor.

The protein resides in the endoplasmic reticulum membrane. It is found in the microsome membrane. The enzyme catalyses an organic molecule + reduced [NADPH--hemoprotein reductase] + O2 = an alcohol + oxidized [NADPH--hemoprotein reductase] + H2O + H(+). Its function is as follows. Cytochromes P450 are a group of heme-thiolate monooxygenases. They oxidize a variety of structurally unrelated compounds, including steroids, fatty acids, and xenobiotics. In Platichthys flesus (European flounder), this protein is Cytochrome P450 1A1 (cyp1a1).